The following is a 503-amino-acid chain: 12-dehydrotetracycline 5-monooxygenase/anhydrotetracycline 6-monooxygenase (503 aa).

FAD contacts are provided by residues T13, E32–R33, L44, Q99, V123, T160, D288, and L301–N302.

It belongs to the PheA/TfdB FAD monooxygenase family. As to quaternary structure, monomer. It depends on FAD as a cofactor.

The enzyme catalyses 5a,11a-dehydrotetracycline + NADPH + O2 + H(+) = 5a,11a-dehydrooxytetracycline + NADP(+) + H2O. It catalyses the reaction anhydrotetracycline + NADPH + O2 + H(+) = 5a,11a-dehydrotetracycline + NADP(+) + H2O. Its pathway is antibiotic biosynthesis; oxytetracycline biosynthesis. Its function is as follows. Involved in the biosynthesis of the antibiotics oxytetracycline and tetracycline. OxyS starts by catalyzing the stereospecific hydroxylation of anhydrotetracycline at C(6) position to yield 5a,11a-dehydrotetracycline (12-dehydrotetracycline). If the released product is captured by OxyR, it is reduced to tetracycline. However, if the released product is recaptured by OxyS, it performs an additional hydroxylation at C(5), producing 5a,11a-dehydrooxytetracycline, which, following the action of OxyR becomes oxytetracycline. The chain is 12-dehydrotetracycline 5-monooxygenase/anhydrotetracycline 6-monooxygenase from Streptomyces rimosus subsp. rimosus (strain ATCC 10970 / DSM 40260 / JCM 4667 / NRRL 2234).